A 293-amino-acid polypeptide reads, in one-letter code: 33 kDa chaperonin (293 aa).

Disulfide bonds link Cys-237/Cys-239 and Cys-271/Cys-274.

The protein belongs to the HSP33 family. In terms of processing, under oxidizing conditions two disulfide bonds are formed involving the reactive cysteines. Under reducing conditions zinc is bound to the reactive cysteines and the protein is inactive.

The protein localises to the cytoplasm. Redox regulated molecular chaperone. Protects both thermally unfolding and oxidatively damaged proteins from irreversible aggregation. Plays an important role in the bacterial defense system toward oxidative stress. This Haemophilus influenzae (strain PittEE) protein is 33 kDa chaperonin.